The sequence spans 223 residues: Kinetochore protein Spc25 (223 aa).

Residues 65 to 115 adopt a coiled-coil conformation; that stretch reads LRCGELEKRANFMEELTQELEATKQRNLVMRDQIKQLNVLARQHRNEVMES.

Belongs to the SPC25 family. Component of the Ndc80 complex, which is composed of Ndc80, Nuf2 and Spc25.

The protein resides in the nucleus. The protein localises to the chromosome. It localises to the centromere. Its subcellular location is the kinetochore. In terms of biological role, acts as a component of the essential kinetochore-associated Ndc80 complex, which is required for chromosome segregation and spindle checkpoint activity during meiosis and mitosis. Required for kinetochore integrity and the organization of stable microtubule binding sites in the outer plate of the kinetochore. Participates in SAC signaling that responds specifically to disruptions in spindle microtubule dynamics. The NDC80 complex synergistically enhances the affinity of the SKA1 complex for microtubules and may allow the NDC80 complex to track depolymerizing microtubules. The sequence is that of Kinetochore protein Spc25 from Drosophila lutescens (Fruit fly).